The chain runs to 526 residues: Clostripain (526 aa).

A signal peptide spans 1–27 (MLRRKVSTLLMTALITTSFLNSKPVYA). Positions 28–50 (NPVTKSKDNNLKEVQQVTSKSNK) are excised as a propeptide. Residues 182–190 (EKSNPRLNR) constitute a propeptide, linker. Cys-231 serves as the catalytic Nucleophile.

Belongs to the peptidase C11 family. Heterodimer of a light chain and a heavy chain held together by strong non-covalent forces rather than by intramolecular disulfide bridges.

It catalyses the reaction Preferential cleavage: Arg-|-Xaa, including Arg-|-Pro bond, but not Lys-|-Xaa.. In terms of biological role, cysteine endopeptidase with strict specificity. In Hathewaya histolytica (Clostridium histolyticum), this protein is Clostripain (cloSI).